We begin with the raw amino-acid sequence, 290 residues long: MKLSLLASVALVPFVSAHYFFDVLVIDGKETRSNEFVRSNTRPAKYNPTKWKNIRDDMTPDMPDFRCNKGAFTFAGQTGTAEVKAGSKLAMKLAVGATMQHPGPALVYMSKAPSSAKTYEGDGDWFKIHEEGVCNKNADFTKDAWCTWDKDRIEFTIPADLPDGEYLIRPEHIGLHGAHDGQAEFYYTCAQVKVVGGGTGTPGPTIKFPGGYKKDDPSFNFSLWNGYKDYPMPGPTVWTGGSGSGSSSYSKVANVTSSDESSQSGASSSQGTVSTCPNKYNRRHARQFKP.

Residues 1–17 form the signal peptide; the sequence is MKLSLLASVALVPFVSA. Residues His-18 and His-101 each contribute to the Cu(2+) site. A disulfide bridge links Cys-67 with Cys-189. Residue His-176 coordinates O2. Tyr-187 lines the Cu(2+) pocket. 2 N-linked (GlcNAc...) asparagine glycosylation sites follow: Asn-220 and Asn-254. The interval 240–290 is disordered; sequence GGSGSGSSSYSKVANVTSSDESSQSGASSSQGTVSTCPNKYNRRHARQFKP. Residues 245 to 275 show a composition bias toward low complexity; that stretch reads GSSSYSKVANVTSSDESSQSGASSSQGTVST. The segment covering 280–290 has biased composition (basic residues); sequence YNRRHARQFKP.

The protein belongs to the polysaccharide monooxygenase AA9 family. Cu(2+) is required as a cofactor.

Its subcellular location is the secreted. It carries out the reaction [(1-&gt;4)-beta-D-glucosyl]n+m + reduced acceptor + O2 = 4-dehydro-beta-D-glucosyl-[(1-&gt;4)-beta-D-glucosyl]n-1 + [(1-&gt;4)-beta-D-glucosyl]m + acceptor + H2O.. Functionally, lytic polysaccharide monooxygenase (LPMO) that depolymerizes crystalline and amorphous polysaccharides via the oxidation of scissile alpha- or beta-(1-4)-glycosidic bonds, yielding exclusively C1 oxidation products. Catalysis by LPMOs requires the reduction of the active-site copper from Cu(II) to Cu(I) by a reducing agent and H(2)O(2) or O(2) as a cosubstrate. The chain is AA9 family lytic polysaccharide monooxygenase A from Aspergillus fumigatus (strain ATCC MYA-4609 / CBS 101355 / FGSC A1100 / Af293) (Neosartorya fumigata).